The sequence spans 412 residues: Putative membrane protein 337L (412 aa).

N171, N186, N247, and N271 each carry an N-linked (GlcNAc...) asparagine; by host glycan. Residues 387-407 (VLITGIAVTGVAVLLFLLLMF) traverse the membrane as a helical segment.

The protein belongs to the IIV-6 337L family.

Its subcellular location is the virion membrane. The chain is Putative membrane protein 337L from Acheta domesticus (House cricket).